The chain runs to 107 residues: MMKVLVVVALLVTLISYSSSEGIDDLEADELLSLMANEQTRKECIPKHHECTSNKHGCCRGNFFKYKCQCTTVVTQDGEQTERCFCGTPPHREAAELVVGFGKKIFG.

The N-terminal stretch at 1–20 (MMKVLVVVALLVTLISYSSS) is a signal peptide. Residues 21 to 41 (EGIDDLEADELLSLMANEQTR) constitute a propeptide that is removed on maturation. 4 disulfides stabilise this stretch: Cys-44/Cys-59, Cys-51/Cys-68, Cys-58/Cys-86, and Cys-70/Cys-84.

The protein belongs to the neurotoxin 19 (CSTX) family. 04 (U1-Lctx) subfamily. As to expression, expressed by the venom gland.

Its subcellular location is the secreted. This Lycosa singoriensis (Wolf spider) protein is U1-lycotoxin-Ls1o.